The chain runs to 617 residues: Protein kinase STUNTED (617 aa).

Residues 162-187 form a disordered region; it reads SSELSEGFSDKDLAKTTGQEKRKISG. Residues 169–184 show a composition bias toward basic and acidic residues; that stretch reads FSDKDLAKTTGQEKRK. In terms of domain architecture, Protein kinase spans 277-555; it reads FSLENLIGKG…RGEDDVSKWV (279 aa). Residues 283-291 and Lys-305 contribute to the ATP site; that span reads IGKGGCNEV. Tyr-350 bears the Phosphotyrosine mark. The Proton acceptor role is filled by Asp-399. Ser-403 carries the post-translational modification Phosphoserine. The residue at position 439 (Thr-439) is a Phosphothreonine. A Phosphotyrosine modification is found at Tyr-447. Positions 590–617 are disordered; the sequence is DSVSNSSLERSNNSLFSSSSSSSQELQS. Over residues 591 to 617 the composition is skewed to low complexity; that stretch reads SVSNSSLERSNNSLFSSSSSSSQELQS.

This sequence belongs to the protein kinase superfamily. Ser/Thr protein kinase family. Expressed ubiquitously, mostly in roots, to a lower extent in leaves, floral buds and stems, and, at low levels, in flowers and siliques.

It localises to the cytoplasm. Promotes cell proliferation in the gibberellic acid (GA) signaling pathway, acting downstream of RGA, and possibly through a negative regulation of two cyclin-dependent kinase inhibitors SIM and SMR1. This is Protein kinase STUNTED from Arabidopsis thaliana (Mouse-ear cress).